We begin with the raw amino-acid sequence, 372 residues long: Queuine tRNA-ribosyltransferase (372 aa).

Asp-92 serves as the catalytic Proton acceptor. Substrate contacts are provided by residues 92–96 (DSGGY), Asp-146, Gln-188, and Gly-215. Residues 246–252 (GIGSLKE) are RNA binding. The active-site Nucleophile is Asp-265. The tract at residues 270 to 274 (TRLGR) is RNA binding; important for wobble base 34 recognition. Residues Cys-303, Cys-305, Cys-308, and His-334 each contribute to the Zn(2+) site.

This sequence belongs to the queuine tRNA-ribosyltransferase family. In terms of assembly, homodimer. Within each dimer, one monomer is responsible for RNA recognition and catalysis, while the other monomer binds to the replacement base PreQ1. Zn(2+) serves as cofactor.

The catalysed reaction is 7-aminomethyl-7-carbaguanine + guanosine(34) in tRNA = 7-aminomethyl-7-carbaguanosine(34) in tRNA + guanine. It functions in the pathway tRNA modification; tRNA-queuosine biosynthesis. Functionally, catalyzes the base-exchange of a guanine (G) residue with the queuine precursor 7-aminomethyl-7-deazaguanine (PreQ1) at position 34 (anticodon wobble position) in tRNAs with GU(N) anticodons (tRNA-Asp, -Asn, -His and -Tyr). Catalysis occurs through a double-displacement mechanism. The nucleophile active site attacks the C1' of nucleotide 34 to detach the guanine base from the RNA, forming a covalent enzyme-RNA intermediate. The proton acceptor active site deprotonates the incoming PreQ1, allowing a nucleophilic attack on the C1' of the ribose to form the product. After dissociation, two additional enzymatic reactions on the tRNA convert PreQ1 to queuine (Q), resulting in the hypermodified nucleoside queuosine (7-(((4,5-cis-dihydroxy-2-cyclopenten-1-yl)amino)methyl)-7-deazaguanosine). In Prochlorococcus marinus (strain MIT 9301), this protein is Queuine tRNA-ribosyltransferase.